We begin with the raw amino-acid sequence, 940 residues long: Isoleucine--tRNA ligase (940 aa).

Positions 58–68 match the 'HIGH' region motif; sequence PYANGSIHIGH. Glutamate 564 is a binding site for L-isoleucyl-5'-AMP. The short motif at 605-609 is the 'KMSKS' region element; sequence KMSKS. Residue lysine 608 participates in ATP binding. Zn(2+) is bound by residues cysteine 903, cysteine 906, cysteine 923, and cysteine 926.

The protein belongs to the class-I aminoacyl-tRNA synthetase family. IleS type 1 subfamily. Monomer. Requires Zn(2+) as cofactor.

The protein localises to the cytoplasm. It carries out the reaction tRNA(Ile) + L-isoleucine + ATP = L-isoleucyl-tRNA(Ile) + AMP + diphosphate. Functionally, catalyzes the attachment of isoleucine to tRNA(Ile). As IleRS can inadvertently accommodate and process structurally similar amino acids such as valine, to avoid such errors it has two additional distinct tRNA(Ile)-dependent editing activities. One activity is designated as 'pretransfer' editing and involves the hydrolysis of activated Val-AMP. The other activity is designated 'posttransfer' editing and involves deacylation of mischarged Val-tRNA(Ile). In Shewanella sp. (strain MR-4), this protein is Isoleucine--tRNA ligase.